Here is a 720-residue protein sequence, read N- to C-terminus: MPSCCCLLGLGFPSPPSALRILRRRMASRAFQLRLNPLTGDSEWLVVEEEEEEDHHPTPPPKQLLATTSYLDMLNDSARNRAYRRAIEAAVTDPSSRVLDIGAGTGLLSMMAARALAAVGGETRGGSVSACESYLPMGKLMRRVLRANGMENRVKVFHKRSDELKVRDDLDSPADILVSEILDSELLGEGLIPTLQQAYDMLLAKNPKIVPYRATTYGQLVESTFLWKLHDLHNNEANAADGVWLTPGEMERIVSVKPQQHAMQCDALEDEIRLLSEPFKVFEFDFWKRPDSHREANIKIRTTRDGYVHAIISWWVLQLDSAGSIFYSTAPRWARQSSSEGPQRDMKDWCDHWKQCVWFMQGKGIPATEDQVLSLRARHNQTSISYQLNINDEACDRSSKGDHLTLLPERIALYGDKDWRSALINTIKNALTVKSSPTCVVADDSMFLALLISSMSPTSKVIAMYPGLRDKGAAYLRSVADANNFSIDQIQVIGKRASSITADDLKHKKVNLLVGEPFYLGSEGMLPWQNLRFWSVRTLLDSMLSEDAFIMPCKGILKLCAMSLPDLWRSRSSLKDVEGFDHSVVNETLGACGCLPGDQQGPCLPYYVWQCGYTKKLSKVYSLMDFNFSEPIHSCFGKTKIEFSHDGTCHGFAVWIDWVLDERKSVVLTTGPDNRYWKQGVQLFSKPVEVNPGKSVMHVEASFDPSTGEITFSSSSTTCS.

2 consecutive SAM-dependent MTase PRMT-type domains span residues 54 to 385 (DHHP…TSIS) and 387 to 720 (QLNI…TTCS). Active-site residues include glutamate 180 and glutamate 189.

The protein belongs to the class I-like SAM-binding methyltransferase superfamily. Protein arginine N-methyltransferase family. PRMT7 subfamily.

Its function is as follows. Arginine methyltransferase that can both catalyze the formation of omega-N monomethylarginine (MMA) and symmetrical dimethylarginine (sDMA). This is Protein arginine N-methyltransferase 7 (PRMT7) from Oryza sativa subsp. japonica (Rice).